The sequence spans 177 residues: Large ribosomal subunit protein uL6 (177 aa).

Belongs to the universal ribosomal protein uL6 family. Part of the 50S ribosomal subunit.

This protein binds to the 23S rRNA, and is important in its secondary structure. It is located near the subunit interface in the base of the L7/L12 stalk, and near the tRNA binding site of the peptidyltransferase center. This is Large ribosomal subunit protein uL6 from Klebsiella pneumoniae (strain 342).